Consider the following 509-residue polypeptide: MEKWRIYSFQKEFERRCGLNSSLGPIETTGEDPNRKDTVKNIQSWEDCDNSSCSNVDHLFGVKDNENFISDDTFVVFDIENQIFEIDNDHSFLNEPFSSYSDRNSSYLTNVFTSEDPYYNRYMYDAQYSWNNHINGCIDSYLQSQICIDTTTVSGSDNDSYDIHGSVCDGESHNSSEGESSSRRTHTKGVDLTIRESSNENERESSNENERKSSNDLDRTKKYRDLWLQCENCYGLNYKKFLKSKMNICEQCGYHLKMSSSDRIELLIDPGTWDPMDEYMVSQDPIEFDSEGEQEQEQEQEQEEEETYKDRIDFYQTKTGLTEAVQTGIGQLNGIPVAIGVMDFHFLGGSMGSVVGEKITRLIEHATNNFLPLIIVCASGGARMQEGSLSLMQMAKISSALYEYQLNKRLFYVSILTSPTTGGVTASFGMLGDVIIVEPNAYVAFAGKRVIEQTLNQTVPEGSQEAEYLFEKGLFDLIVPRHLLKSVLSELFEFHALFPLNQNSNQVEC.

The segment at 164–216 (HGSVCDGESHNSSEGESSSRRTHTKGVDLTIRESSNENERESSNENERKSSND) is disordered. Composition is skewed to basic and acidic residues over residues 170-182 (GESHNSSEGESSS) and 193-216 (TIRESSNENERESSNENERKSSND). The CoA carboxyltransferase N-terminal domain occupies 226-509 (LWLQCENCYG…LNQNSNQVEC (284 aa)). Residues Cys230, Cys233, Cys249, and Cys252 each coordinate Zn(2+). The segment at 230–252 (CENCYGLNYKKFLKSKMNICEQC) adopts a C4-type zinc-finger fold. Positions 288 to 307 (FDSEGEQEQEQEQEQEEEET) are disordered.

The protein belongs to the AccD/PCCB family. Acetyl-CoA carboxylase is a heterohexamer composed of biotin carboxyl carrier protein, biotin carboxylase and 2 subunits each of ACCase subunit alpha and ACCase plastid-coded subunit beta (accD). Zn(2+) is required as a cofactor.

Its subcellular location is the plastid. The protein resides in the chloroplast stroma. The catalysed reaction is N(6)-carboxybiotinyl-L-lysyl-[protein] + acetyl-CoA = N(6)-biotinyl-L-lysyl-[protein] + malonyl-CoA. Its pathway is lipid metabolism; malonyl-CoA biosynthesis; malonyl-CoA from acetyl-CoA: step 1/1. Functionally, component of the acetyl coenzyme A carboxylase (ACC) complex. Biotin carboxylase (BC) catalyzes the carboxylation of biotin on its carrier protein (BCCP) and then the CO(2) group is transferred by the transcarboxylase to acetyl-CoA to form malonyl-CoA. This Ipomoea purpurea (Common morning glory) protein is Acetyl-coenzyme A carboxylase carboxyl transferase subunit beta, chloroplastic.